The primary structure comprises 314 residues: Homoserine O-acetyltransferase (314 aa).

Cys-142 acts as the Acyl-thioester intermediate in catalysis. Substrate is bound by residues Lys-163 and Ser-192. His-235 (proton acceptor) is an active-site residue. Residue Glu-237 is part of the active site. Arg-249 contributes to the substrate binding site.

Belongs to the MetA family.

Its subcellular location is the cytoplasm. The catalysed reaction is L-homoserine + acetyl-CoA = O-acetyl-L-homoserine + CoA. Its pathway is amino-acid biosynthesis; L-methionine biosynthesis via de novo pathway; O-acetyl-L-homoserine from L-homoserine: step 1/1. Transfers an acetyl group from acetyl-CoA to L-homoserine, forming acetyl-L-homoserine. This is Homoserine O-acetyltransferase from Streptococcus pneumoniae serotype 4 (strain ATCC BAA-334 / TIGR4).